The following is an 897-amino-acid chain: Echinoderm microtubule-associated protein-like 3 (897 aa).

Position 1 is an N-acetylmethionine (methionine 1). Residues 16-43 (LQTLSQRLRVQEEEMELVKAALAEALRL) adopt a coiled-coil conformation. Residues 51–68 (TTLQGSGISAPTRNSSIT) show a composition bias toward polar residues. Residues 51–210 (TTLQGSGISA…GGPGSRRSNY (160 aa)) form a disordered region. 3 stretches are compositionally biased toward low complexity: residues 96-108 (PSSGPPGLSNGPP), 118-132 (SGTQSEGGCSSSSGA), and 155-164 (RNSSSSSSPS). Residues 175-190 (AASSANLLLRSGSTES) are compositionally biased toward polar residues. Phosphoserine is present on residues serine 177, serine 199, and serine 205. 13 WD repeats span residues 235-287 (RSLE…LYRP), 296-345 (GGGQ…IWDS), 351-393 (LQEI…VWDC), 399-435 (LAEIKSTNDSVLAVGFSPRDSSCIVTSGKSHVHFWNW), 449-488 (RKQGVFGKYKKPKFIPCFVFLPDGDILTGDSEGNILTWGR), 505-544 (YTIVAQAHAHEGSIFALCLRRDGTVLSGGGRDRRLVQWGP), 550-585 (QEAEIPEHFGAVRAIAEGLGSELLVGTTKNALLRGD), 590-627 (FSPVIQGHTDELWGLCTHPSQNRFLTCGHDRQLCLWDG), 630-668 (HALAWSMDLKETGLCADFHPSGAVVVVGLNTGRWLVLDT), 675-710 (SDVTDGNEQLSVVRYSPDGLYLAIGSHDNMIYIYSV), 717-756 (SSRFGRCMGHSSFITHLDWSKDGNFIMSNSGDYEILYWDV), 766-824 (RYES…LFQY), and 831-870 (APSRMYSGHGSHVTSVRFTHDDSYLVSLGGKDASIFQWRV). The disordered stretch occupies residues 876-897 (SGPAPATPSRTPSLSPASSLDV). Threonine 882 carries the phosphothreonine; by CDK1 modification. Residues 883 to 897 (PSRTPSLSPASSLDV) are compositionally biased toward polar residues. Phosphoserine is present on serine 884.

The protein belongs to the WD repeat EMAP family. As to quaternary structure, homotrimer; self-association is mediated by the N-terminal coiled coil. Interacts with EML2 but not with EML1. Interacts (phosphorylated at Thr-882) with TUBG1, HAUS1, HAUS2, HAUS3, HAUS4, HAUS5, HAUS6, HAUS7 and HAUS8. Post-translationally, phosphorylation at Thr-882 during mitosis is required for interaction with TUBG1, HAUS1, HAUS2, HAUS3, HAUS4, HAUS5, HAUS6, HAUS7 and HAUS8 and their recruitment to spindle microtubules.

The protein localises to the cytoplasm. It is found in the cytoskeleton. Its subcellular location is the nucleus. It localises to the midbody. The protein resides in the spindle. Regulates mitotic spindle assembly, microtubule (MT)-kinetochore attachment and chromosome separation via recruitment of HAUS augmin-like complex and TUBG1 to the existing MTs and promoting MT-based MT nucleation. Required for proper alignnment of chromosomes during metaphase. This is Echinoderm microtubule-associated protein-like 3 (Eml3) from Mus musculus (Mouse).